The chain runs to 357 residues: Protein RecA (357 aa).

79-86 (GPESSGKT) is an ATP binding site.

It belongs to the RecA family.

The protein resides in the cytoplasm. Its function is as follows. Can catalyze the hydrolysis of ATP in the presence of single-stranded DNA, the ATP-dependent uptake of single-stranded DNA by duplex DNA, and the ATP-dependent hybridization of homologous single-stranded DNAs. It interacts with LexA causing its activation and leading to its autocatalytic cleavage. The polypeptide is Protein RecA (Chloroherpeton thalassium (strain ATCC 35110 / GB-78)).